The following is a 287-amino-acid chain: CTD small phosphatase-like protein 3 (287 aa).

In terms of domain architecture, FCP1 homology spans Arg-60–Ile-219.

This sequence belongs to the CTDSPL2 family.

In terms of biological role, probable phosphatase. This Caenorhabditis elegans protein is CTD small phosphatase-like protein 3 (scpl-3).